Consider the following 1059-residue polypeptide: Zinc finger protein 628 (1059 aa).

6 consecutive C2H2-type zinc fingers follow at residues 36–58 (YECG…QRTH), 64–86 (YKCP…QRGH), 92–114 (YQCP…RSVH), 120–142 (FICG…LRQH), 148–170 (YPCP…RHVH), and 176–198 (YTCG…QRVH). At T199 the chain carries Phosphothreonine. The C2H2-type 7 zinc-finger motif lies at 204–226 (FRCPLCPKTFTHSSNLLLHQRTH). Disordered stretches follow at residues 226–247 (HGAA…REPG), 260–280 (LQPH…PVVP), and 312–351 (EHQP…PAAA). Residues 228-237 (AAPAPGTASA) are compositionally biased toward low complexity. Residues 263–279 (HSPPAPPAPPPPPPPVV) are compositionally biased toward pro residues. Residues 323–335 (PQPQEAPAEAPKA) are compositionally biased toward low complexity. The span at 336–351 (DQPPSPLPQPPPPAAA) shows a compositional bias: pro residues. 7 consecutive C2H2-type zinc fingers follow at residues 356–378 (FACL…QHSH), 386–408 (FRCG…QQCH), 454–476 (YKCA…LRDH), 482–504 (YQCG…QRVH), 510–532 (FTCG…LRLH), 538–560 (YACG…RHVH), and 566–588 (HACG…QRVH). T589 is subject to Phosphothreonine. 2 consecutive C2H2-type zinc fingers follow at residues 594–616 (FRCP…QRTH) and 622–644 (FTCP…LRTH). A compositionally biased stretch (low complexity) spans 644 to 658 (HAPANTPPSTTAPAA). A disordered region spans residues 644 to 674 (HAPANTPPSTTAPAAGPQPPAPLAAARAPPA). A run of 4 repeats spans residues 818–831 (VQLQ…EVTT), 832–842 (VQLQPAQEVTT), 843–853 (VQLQPAQEVTT), and 854–864 (VQLQPAQEVTT). The segment at 818-864 (VQLQPLRPAPEVTTVQLQPAQEVTTVQLQPAQEVTTVQLQPAQEVTT) is 4 X approximate tandem repeats. Residues 943–1059 (DGEQTRLCVQ…LPAVQLVHTF (117 aa)) are interaction with TAF4B.

Interacts with TAF4B.

Its subcellular location is the nucleus. Transcriptional activator. Binds DNA on GT-box consensus sequence 5'-TTGGTT-3'. Plays a role in spermiogenesis. This is Zinc finger protein 628 (ZNF628) from Homo sapiens (Human).